A 274-amino-acid polypeptide reads, in one-letter code: Small nuclear ribonucleoprotein-associated protein B (274 aa).

The 81-residue stretch at 5–85 (PKSSKMLQYI…VVSMSVEAPP (81 aa)) folds into the Sm domain. Residues 148–274 (PGGGVPPPMG…PMGRGGFQRK (127 aa)) form a disordered region. The stretch at 162–171 (PPQGFPPGGP) is repeat 1. The 6 X 10 AA repeats of P-P-Q-G-F-P-P-G-G-P stretch occupies residues 162 to 265 (PPQGFPPGGP…PPQGFPPGGP (104 aa)). Over residues 173–187 (PQGAFNNNPNNNNGG) the composition is skewed to low complexity. 5 tandem repeats follow at residues 188–197 (PPQGFPPGGP), 204–213 (PPQGFPPGGP), 225–234 (PPQGFPPGGP), 241–250 (PPQGFPPGGP), and 256–265 (PPQGFPPGGP). Low complexity predominate over residues 216–226 (GPNLNNGNMPP). A compositionally biased stretch (gly residues) spans 265 to 274 (PMGRGGFQRK).

Belongs to the snRNP SmB/SmN family.

The protein localises to the cytoplasm. Its subcellular location is the cytosol. It localises to the nucleus. Plays a role in pre-mRNA splicing as a core component of the spliceosomal U1, U2, U4 and U5 small nuclear ribonucleoproteins (snRNPs), the building blocks of the spliceosome. In Dictyostelium discoideum (Social amoeba), this protein is Small nuclear ribonucleoprotein-associated protein B (snrpb).